Reading from the N-terminus, the 237-residue chain is Concanavalin V (237 aa).

Glu8 and Asp10 together coordinate Mn(2+). Positions 10, 12, 14, and 19 each coordinate Ca(2+). Residue Asn14 coordinates a carbohydrate. Asp19 and His24 together coordinate Mn(2+). Residues Gly70, 98–100 (GLY), Asp208, and Arg228 each bind a carbohydrate.

This sequence belongs to the leguminous lectin family. In terms of assembly, homotetramer. Concanavalin A-like lectins of the Diocleinae subtribe undergo proteolytic processing referred to as circular permutation. The propeptide is split into an N-terminal and a C-terminal part, the gamma and beta chain, respectively. These are then religated in beta-gamma order to form the mature alpha chain. The beta and gamma chains can often be detected in cell extracts. Residues 1-118 of the mature chain, as displayed here, probably constitute the beta chain in the propeptide, residues 119-237 the gamma chain.

Its function is as follows. D-mannose/D-glucose-binding lectin which binds alpha-methyl-D-mannoside, D-mannose and D-glucose in that order. Also binds to serum fetuin and ovalbumin. Has hemagglutinating activity towards rabbit erythrocytes. Is not toxic towards larvae of the brine shrimp Artemia. Induces relaxation in rat endothelized aorta. Shows a transient edematogenic effect in rat. This chain is Concanavalin V, found in Canavalia cathartica (Jackbean).